Here is a 131-residue protein sequence, read N- to C-terminus: POU domain, class 3, transcription factor 3 (131 aa).

Positions 1 to 60 (FTQRRMKLGFTQADVGLALGTLYGNVFSQTTICRFEALQLSFKNMCKLKPLLNKWLEEAD) constitute a POU-specific domain. Positions 78-131 (KRKKRTSIEVSVKGALESHFLKCPKPSAQEITNLADSLQLEKEVVRVWFCNNLQ) form a DNA-binding region, homeobox.

The protein belongs to the POU transcription factor family. Class-3 subfamily. In terms of assembly, homodimer. In terms of tissue distribution, brain.

Its subcellular location is the nucleus. Transcription factor that acts synergistically with SOX11 and SOX4. Plays a role in neuronal development. Is implicated in an enhancer activity at the embryonic met-mesencephalic junction; the enhancer element contains the octamer motif (5'-ATTTGCAT-3'). The chain is POU domain, class 3, transcription factor 3 (POU3F3) from Sus scrofa (Pig).